We begin with the raw amino-acid sequence, 703 residues long: Heat shock protein 75 kDa, mitochondrial (703 aa).

Residues 1 to 56 (MARELRMLLLWGRRLRAPALAAACGGKPVLCPWRPPAQSWGPPRSLASSFHVGRPF) constitute a mitochondrion transit peptide. Asn-118 and Asp-157 together coordinate ATP. Residue Ser-169 is modified to Phosphoserine. An ATP-binding site is contributed by Asn-170. A Phosphothreonine modification is found at Thr-173. ATP-binding residues include Phe-204 and Arg-401. An N6-acetyllysine mark is found at Lys-423, Lys-430, and Lys-465. Phosphothreonine is present on Thr-493.

Belongs to the heat shock protein 90 family. In terms of assembly, binds to the intracellular domain of tumor necrosis factor type 1 receptor. Binds to RB1. Interacts with SRC. Interacts with SDHA.

Its subcellular location is the mitochondrion. It localises to the mitochondrion inner membrane. The protein resides in the mitochondrion matrix. In terms of biological role, chaperone that expresses an ATPase activity. Involved in maintaining mitochondrial function and polarization, downstream of PINK1 and mitochondrial complex I. Is a negative regulator of mitochondrial respiration able to modulate the balance between oxidative phosphorylation and aerobic glycolysis. The impact of TRAP1 on mitochondrial respiration is probably mediated by modulation of mitochondrial SRC and inhibition of SDHA. This is Heat shock protein 75 kDa, mitochondrial (TRAP1) from Bos taurus (Bovine).